The following is a 390-amino-acid chain: Cyclic amide hydrolase (390 aa).

The tract at residues 1–118 (MPNPEASLSP…TVVTQEWVAD (118 aa)) is RU A. Residues arginine 66 and 97–98 (SG) contribute to the substrate site. The segment at 127–268 (GLVVGRGHTE…GEVLLLANSA (142 aa)) is RU B. Lysine 177 is an active-site residue. Residues asparagine 213, 251-252 (SS), lysine 346, and 365-366 (SG) each bind substrate. Serine 251 serves as the catalytic Nucleophile. The interval 274–390 (LRIGHGITRD…VAAVVRRLPA (117 aa)) is RU C.

The protein belongs to the cyclic amide hydrolase (CyAH) family. Homotetramer; disulfide-linked. The disulfide forms between 2 monomers in the tetramer, such that each tetramer contains 2 sets of vicinal disulfides.

Cyclic amide hydrolase of unknown substrate specificity. Catalyzes the hydrolytic ring-opening of a cyclic amide. Does not act on cyanuric acid nor barbituric acid. The protein is Cyclic amide hydrolase of Pseudofrankia inefficax (strain DSM 45817 / CECT 9037 / DDB 130130 / EuI1c) (Frankia inefficax).